A 547-amino-acid chain; its full sequence is Chaperonin GroEL (547 aa).

ATP-binding positions include 30 to 33 (TLGP), lysine 51, 87 to 91 (DGTTT), glycine 415, and aspartate 496. Positions 528–547 (KEGAAPAGGMPDMGGMGGMM) are disordered. A compositionally biased stretch (gly residues) spans 538–547 (PDMGGMGGMM).

The protein belongs to the chaperonin (HSP60) family. In terms of assembly, forms a cylinder of 14 subunits composed of two heptameric rings stacked back-to-back. Interacts with the co-chaperonin GroES.

Its subcellular location is the cytoplasm. The catalysed reaction is ATP + H2O + a folded polypeptide = ADP + phosphate + an unfolded polypeptide.. Together with its co-chaperonin GroES, plays an essential role in assisting protein folding. The GroEL-GroES system forms a nano-cage that allows encapsulation of the non-native substrate proteins and provides a physical environment optimized to promote and accelerate protein folding. The polypeptide is Chaperonin GroEL (Ruegeria sp. (strain TM1040) (Silicibacter sp.)).